Reading from the N-terminus, the 433-residue chain is ATP-dependent protease ATPase subunit HslU (433 aa).

ATP-binding positions include Ile18, Gly60–Glu65, Asp246, Glu311, and Arg383.

It belongs to the ClpX chaperone family. HslU subfamily. As to quaternary structure, a double ring-shaped homohexamer of HslV is capped on each side by a ring-shaped HslU homohexamer. The assembly of the HslU/HslV complex is dependent on binding of ATP.

The protein localises to the cytoplasm. Functionally, ATPase subunit of a proteasome-like degradation complex; this subunit has chaperone activity. The binding of ATP and its subsequent hydrolysis by HslU are essential for unfolding of protein substrates subsequently hydrolyzed by HslV. HslU recognizes the N-terminal part of its protein substrates and unfolds these before they are guided to HslV for hydrolysis. The polypeptide is ATP-dependent protease ATPase subunit HslU (Cereibacter sphaeroides (strain ATCC 17025 / ATH 2.4.3) (Rhodobacter sphaeroides)).